The chain runs to 725 residues: Rab-like protein 6 (725 aa).

Met-1 carries the post-translational modification N-acetylmethionine. The small GTPase-like stretch occupies residues 39–279 (GVQYNMKIVI…IFLEMMEARS (241 aa)). GTP contacts are provided by residues 50 to 57 (GDRNTGKT), 100 to 104 (DVVDK), and 177 to 179 (YRD). Disordered stretches follow at residues 281–364 (GHAS…PAPA) and 378–725 (PAAE…YEEL). 2 stretches are compositionally biased toward low complexity: residues 291–325 (QSPS…QLSL) and 343–353 (AMPSSVHSSAP). Positions 410-427 (GLDRSFLEDTSVPKDKKV) are enriched in basic and acidic residues. Phosphoserine is present on residues Ser-414, Ser-436, Ser-438, Ser-480, Ser-482, Ser-483, and Ser-502. Residues 499–514 (QQCSEPETKWSSTKVS) are compositionally biased toward polar residues. The span at 537–549 (DSERPQEGKDKQV) shows a compositional bias: basic and acidic residues. Over residues 569-578 (DDPDFESDES) the composition is skewed to acidic residues. Ser-575 and Ser-594 each carry phosphoserine. Position 597 is a phosphothreonine (Thr-597). The span at 632-649 (MGPKESSDEDRDSKLPSK) shows a compositional bias: basic and acidic residues. 3 positions are modified to phosphoserine: Ser-637, Ser-638, and Ser-644. An interaction with CDKN2A region spans residues 652–690 (KKKKKKSKEEEEKTTKKKSKHKKSKDKEEGKEDRKKKRK). The span at 666–675 (TKKKSKHKKS) shows a compositional bias: basic residues. Over residues 707 to 725 (LGGGAPGSRHPGGGDYEEL) the composition is skewed to gly residues.

Belongs to the small GTPase superfamily. Rab family.

Its subcellular location is the nucleus. It is found in the cytoplasm. Functionally, may enhance cellular proliferation. May reduce growth inhibitory activity of CDKN2A. The chain is Rab-like protein 6 (Rabl6) from Mus musculus (Mouse).